Here is a 501-residue protein sequence, read N- to C-terminus: NAD(P)H-quinone oxidoreductase subunit 2, chloroplastic (501 aa).

The next 14 membrane-spanning stretches (helical) occupy residues 15-35 (ILPECVLIFCLISILILDLIL), 42-62 (VFFFISLVSLLLSIFILIFQL), 82-102 (IFRIFIALCSILCIPLSIDFI), 107-127 (LAITEFLIFLLTATIGGMFLC), 132-152 (LITIFVSLECLSLCSYLLSGY), 167-187 (LLIGGTSSSILAYGFSWLYGL), 210-230 (FGSLLALVFIIVGIGFKLSLV), 244-264 (PTPVVAFLSVASKIAGLALLV), 278-298 (WHSLLEISAICSMILGNLVAI), 307-327 (LAYSSISQIGYLMIGLVTGNF), 334-354 (IVYLLFYIFMNLGTFACIILF), 378-398 (FSLALCLLSLGGIPPLSGFFG), 410-430 (GLYFLVFIGLFTSVISIYYYL), and 466-486 (VSIIICVIASIFLGIFMNPII).

It belongs to the complex I subunit 2 family. As to quaternary structure, NDH is composed of at least 16 different subunits, 5 of which are encoded in the nucleus.

Its subcellular location is the plastid. The protein localises to the chloroplast thylakoid membrane. It catalyses the reaction a plastoquinone + NADH + (n+1) H(+)(in) = a plastoquinol + NAD(+) + n H(+)(out). It carries out the reaction a plastoquinone + NADPH + (n+1) H(+)(in) = a plastoquinol + NADP(+) + n H(+)(out). Functionally, NDH shuttles electrons from NAD(P)H:plastoquinone, via FMN and iron-sulfur (Fe-S) centers, to quinones in the photosynthetic chain and possibly in a chloroplast respiratory chain. The immediate electron acceptor for the enzyme in this species is believed to be plastoquinone. Couples the redox reaction to proton translocation, and thus conserves the redox energy in a proton gradient. In Physcomitrium patens (Spreading-leaved earth moss), this protein is NAD(P)H-quinone oxidoreductase subunit 2, chloroplastic.